Reading from the N-terminus, the 901-residue chain is Aconitate hydratase A (901 aa).

Cys443, Cys509, and Cys512 together coordinate [4Fe-4S] cluster.

Belongs to the aconitase/IPM isomerase family. In terms of assembly, monomer. It depends on [4Fe-4S] cluster as a cofactor.

The catalysed reaction is citrate = D-threo-isocitrate. The enzyme catalyses (2S,3R)-3-hydroxybutane-1,2,3-tricarboxylate = 2-methyl-cis-aconitate + H2O. Its pathway is carbohydrate metabolism; tricarboxylic acid cycle; isocitrate from oxaloacetate: step 2/2. It participates in organic acid metabolism; propanoate degradation. Functionally, involved in the catabolism of short chain fatty acids (SCFA) via the tricarboxylic acid (TCA)(acetyl degradation route) and probably the 2-methylcitrate cycle I (propionate degradation route). Catalyzes the reversible isomerization of citrate to isocitrate via cis-aconitate. Could catalyze the hydration of 2-methyl-cis-aconitate to yield (2R,3S)-2-methylisocitrate. The apo form of AcnA functions as a RNA-binding regulatory protein. In Staphylococcus aureus (strain COL), this protein is Aconitate hydratase A (acnA).